A 565-amino-acid polypeptide reads, in one-letter code: Mannosyl-oligosaccharide 1,2-alpha-mannosidase (565 aa).

A disulfide bridge connects residues Cys-320 and Cys-363. Residue Glu-378 is the Proton donor of the active site. Thr-501 contributes to the Ca(2+) binding site. Composition is skewed to basic and acidic residues over residues 526 to 538 (NEKA…KVID) and 550 to 565 (KSAD…EIAG). The disordered stretch occupies residues 526–565 (NEKAQMRESKVIDKSNLPEAQPVDKSADQEAKEIIEEIAG).

Belongs to the glycosyl hydrolase 47 family. The cofactor is Ca(2+).

It carries out the reaction N(4)-(alpha-D-Man-(1-&gt;2)-alpha-D-Man-(1-&gt;2)-alpha-D-Man-(1-&gt;3)-[alpha-D-Man-(1-&gt;2)-alpha-D-Man-(1-&gt;3)-[alpha-D-Man-(1-&gt;2)-alpha-D-Man-(1-&gt;6)]-alpha-D-Man-(1-&gt;6)]-beta-D-Man-(1-&gt;4)-beta-D-GlcNAc-(1-&gt;4)-beta-D-GlcNAc)-L-asparaginyl-[protein] (N-glucan mannose isomer 9A1,2,3B1,2,3) + 4 H2O = N(4)-(alpha-D-Man-(1-&gt;3)-[alpha-D-Man-(1-&gt;3)-[alpha-D-Man-(1-&gt;6)]-alpha-D-Man-(1-&gt;6)]-beta-D-Man-(1-&gt;4)-beta-D-GlcNAc-(1-&gt;4)-beta-D-GlcNAc)-L-asparaginyl-[protein] (N-glucan mannose isomer 5A1,2) + 4 beta-D-mannose. The catalysed reaction is N(4)-(alpha-D-Man-(1-&gt;2)-alpha-D-Man-(1-&gt;2)-alpha-D-Man-(1-&gt;3)-[alpha-D-Man-(1-&gt;3)-[alpha-D-Man-(1-&gt;2)-alpha-D-Man-(1-&gt;6)]-alpha-D-Man-(1-&gt;6)]-beta-D-Man-(1-&gt;4)-beta-D-GlcNAc-(1-&gt;4)-beta-D-GlcNAc)-L-asparaginyl-[protein] (N-glucan mannose isomer 8A1,2,3B1,3) + 3 H2O = N(4)-(alpha-D-Man-(1-&gt;3)-[alpha-D-Man-(1-&gt;3)-[alpha-D-Man-(1-&gt;6)]-alpha-D-Man-(1-&gt;6)]-beta-D-Man-(1-&gt;4)-beta-D-GlcNAc-(1-&gt;4)-beta-D-GlcNAc)-L-asparaginyl-[protein] (N-glucan mannose isomer 5A1,2) + 3 beta-D-mannose. It functions in the pathway protein modification; protein glycosylation. In terms of biological role, involved in the maturation of Asn-linked oligosaccharides. Trim a single alpha-1,2-linked mannose residue from Man(9)GlcNAc(2) to produce Man(8)GlcNAc(2). The protein is Mannosyl-oligosaccharide 1,2-alpha-mannosidase (MNS1) of Candida albicans (Yeast).